Reading from the N-terminus, the 704-residue chain is Fatty acid oxidation complex subunit alpha (704 aa).

The tract at residues 1 to 190 is enoyl-CoA hydratase; sequence MSEQKAFSLK…KLGVVDACVP (190 aa). The interval 308 to 704 is 3-hydroxyacyl-CoA dehydrogenase; sequence TAVNKVGVLG…RAGEGRNFYD (397 aa).

This sequence in the N-terminal section; belongs to the enoyl-CoA hydratase/isomerase family. It in the central section; belongs to the 3-hydroxyacyl-CoA dehydrogenase family. Heterotetramer of two alpha chains (FadJ) and two beta chains (FadI).

Its subcellular location is the cytoplasm. The enzyme catalyses a (3S)-3-hydroxyacyl-CoA = a (2E)-enoyl-CoA + H2O. It catalyses the reaction a 4-saturated-(3S)-3-hydroxyacyl-CoA = a (3E)-enoyl-CoA + H2O. It carries out the reaction a (3S)-3-hydroxyacyl-CoA + NAD(+) = a 3-oxoacyl-CoA + NADH + H(+). The catalysed reaction is (3S)-3-hydroxybutanoyl-CoA = (3R)-3-hydroxybutanoyl-CoA. It participates in lipid metabolism; fatty acid beta-oxidation. Its function is as follows. Catalyzes the formation of a hydroxyacyl-CoA by addition of water on enoyl-CoA. Also exhibits 3-hydroxyacyl-CoA epimerase and 3-hydroxyacyl-CoA dehydrogenase activities. This Vibrio campbellii (strain ATCC BAA-1116) protein is Fatty acid oxidation complex subunit alpha.